A 430-amino-acid polypeptide reads, in one-letter code: Tol-Pal system protein TolB (430 aa).

Positions Met1 to Ala26 are cleaved as a signal peptide.

It belongs to the TolB family. In terms of assembly, the Tol-Pal system is composed of five core proteins: the inner membrane proteins TolA, TolQ and TolR, the periplasmic protein TolB and the outer membrane protein Pal. They form a network linking the inner and outer membranes and the peptidoglycan layer.

It is found in the periplasm. In terms of biological role, part of the Tol-Pal system, which plays a role in outer membrane invagination during cell division and is important for maintaining outer membrane integrity. The chain is Tol-Pal system protein TolB from Paraburkholderia xenovorans (strain LB400).